Reading from the N-terminus, the 276-residue chain is Small ribosomal subunit protein uS3 (276 aa).

The region spanning Ile-39–Lys-110 is the KH type-2 domain. The segment at Asp-218–Arg-243 is disordered. A compositionally biased stretch (basic and acidic residues) spans Ser-227–Arg-243.

The protein belongs to the universal ribosomal protein uS3 family. Part of the 30S ribosomal subunit. Forms a tight complex with proteins S10 and S14.

Its function is as follows. Binds the lower part of the 30S subunit head. Binds mRNA in the 70S ribosome, positioning it for translation. The chain is Small ribosomal subunit protein uS3 from Borrelia hermsii (strain HS1 / DAH).